Reading from the N-terminus, the 211-residue chain is Pyridoxine/pyridoxamine 5'-phosphate oxidase (211 aa).

Residues 7–10 and Lys-65 each bind substrate; that span reads RRDY. Residues 60-65, 75-76, Arg-81, Lys-82, and Gln-104 contribute to the FMN site; these read RIVLLK and YT. Residues Tyr-122, Arg-126, and Ser-130 each coordinate substrate. FMN is bound by residues 139-140 and Trp-184; that span reads QS. 190 to 192 is a substrate binding site; that stretch reads RLH. Arg-194 is an FMN binding site.

It belongs to the pyridoxamine 5'-phosphate oxidase family. In terms of assembly, homodimer. FMN serves as cofactor.

It catalyses the reaction pyridoxamine 5'-phosphate + O2 + H2O = pyridoxal 5'-phosphate + H2O2 + NH4(+). It carries out the reaction pyridoxine 5'-phosphate + O2 = pyridoxal 5'-phosphate + H2O2. It functions in the pathway cofactor metabolism; pyridoxal 5'-phosphate salvage; pyridoxal 5'-phosphate from pyridoxamine 5'-phosphate: step 1/1. It participates in cofactor metabolism; pyridoxal 5'-phosphate salvage; pyridoxal 5'-phosphate from pyridoxine 5'-phosphate: step 1/1. Catalyzes the oxidation of either pyridoxine 5'-phosphate (PNP) or pyridoxamine 5'-phosphate (PMP) into pyridoxal 5'-phosphate (PLP). The protein is Pyridoxine/pyridoxamine 5'-phosphate oxidase of Aliivibrio fischeri (strain ATCC 700601 / ES114) (Vibrio fischeri).